Consider the following 262-residue polypeptide: tRNA pseudouridine synthase A (262 aa).

Asp51 serves as the catalytic Nucleophile. Tyr109 contributes to the substrate binding site.

The protein belongs to the tRNA pseudouridine synthase TruA family. In terms of assembly, homodimer.

It carries out the reaction uridine(38/39/40) in tRNA = pseudouridine(38/39/40) in tRNA. Its function is as follows. Formation of pseudouridine at positions 38, 39 and 40 in the anticodon stem and loop of transfer RNAs. This Aliivibrio fischeri (strain ATCC 700601 / ES114) (Vibrio fischeri) protein is tRNA pseudouridine synthase A.